Consider the following 392-residue polypeptide: Selenide, water dikinase 1 (392 aa).

Residue cysteine 31 is part of the active site. Residues lysine 32, 67 to 69, aspartate 87, aspartate 110, and 161 to 164 contribute to the ATP site; these read GMD and GGQT. Mg(2+) is bound at residue aspartate 69. Aspartate 110 is a binding site for Mg(2+). A Mg(2+)-binding site is contributed by aspartate 265. Position 387 is a phosphothreonine (threonine 387).

The protein belongs to the selenophosphate synthase 1 family. Class II subfamily. In terms of assembly, homodimer. The cofactor is Mg(2+).

It localises to the cell membrane. The protein localises to the nucleus membrane. The enzyme catalyses hydrogenselenide + ATP + H2O = selenophosphate + AMP + phosphate + 2 H(+). Functionally, synthesizes selenophosphate from selenide and ATP. The polypeptide is Selenide, water dikinase 1 (sephs1) (Danio rerio (Zebrafish)).